The sequence spans 647 residues: MEVKGKKKFTGKSPQTSQGKNKFHKNSESSSSKTFPRKAVKEGGPKVTSKNFEKGATKPGKKGVKQFKNKPQGGKGPKDKFQKANKFSKKRKFQPDGESDESGAKKPKWDDFKKKKKELKQSRQLSDKTNYDIVVRAKHIWESLRRKDCDKEKRVKLMSDLQKLIQGKIKTIAFAHDSTRVIQCFIQYGNEEQRKQAFQELQGDLVELSKAKYSRNIVKKFLMYGSKPQVAEIIRSFKGHVRKMLRHSEASAIVEYAYNDKAILEQRNMLTEELYGNTFQLYKSADHPTLDKVLELQPAKLELIMDEMKQILTPMAQKEAVIKHSLVHKVFLDFFTYAPPKPRSELIEAIREAVVYLAHTHDGARVAMHCLWHGTPKDRKVIVKTMKTYVEKVANGQYSHLVLLAAFDCIDDTKLVKQIIISEIISSLPSIVNDKYGRKVLLYLMSPRDPAHTVPELIELLQKGDGNAHSKKDTAIRRRELLESISPALLSYLQGHTQEVVLDKSACVLVSDMLGSATGDVQPAMDAIASLAAAELHPGGKDGELHVAEHPAGHLVLKWLLEQDKKMKESGKEGCFAKTLVERVGMKNLKSWASINRGAIILSSLLQSCDQEVVNKVKGGLKPLIPTLEKNKSSSRGIQTLLEKLTA.

The span at M1–T10 shows a compositional bias: basic residues. The segment at M1 to R123 is disordered. K33 carries the post-translational modification N6-acetyllysine. Residues P59 to K68 are compositionally biased toward basic residues. Residues S102–R123 are compositionally biased toward basic and acidic residues. The short motif at K105–K117 is the Nuclear localization signal element. One can recognise a PUM-HD domain in the interval E142–L509. Pumilio repeat units lie at residues H176 to A211, K212 to H247, S248 to G276, P288 to H324, S325 to T360, H361 to G396, Q397 to D434, K435 to D503, K504 to H550, P551 to I595, and N596 to S635.

As to quaternary structure, interacts with PARP1 (via catalytic domain). In terms of tissue distribution, in the adult eye, expressed primarily in retinal ganglion cells and, to a lesser extent, in the pigmented cells.

It is found in the nucleus. The protein resides in the nucleolus. It localises to the nucleoplasm. The protein localises to the chromosome. Functionally, inhibits the poly(ADP-ribosyl)ation activity of PARP1 and the degradation of PARP1 by CASP3 following genotoxic stress. Binds to double-stranded RNA or DNA without sequence specificity. Involved in development of the eye and of primordial germ cells. In Mus musculus (Mouse), this protein is Pumilio homolog 3.